The primary structure comprises 407 residues: Substance-P receptor (407 aa).

Topologically, residues Met-1–Gln-31 are extracellular. N-linked (GlcNAc...) asparagine glycosylation is found at Asn-14 and Asn-18. The chain crosses the membrane as a helical span at residues Ile-32–Met-54. Residues Trp-55–Arg-64 are Cytoplasmic-facing. The chain crosses the membrane as a helical span at residues Thr-65–Thr-86. The Extracellular segment spans residues Val-87–Lys-106. Cys-105 and Cys-180 are disulfide-bonded. Residues Phe-107–Phe-128 traverse the membrane as a helical segment. At Asp-129 to Lys-148 the chain is on the cytoplasmic side. Residues Val-149–Ser-169 traverse the membrane as a helical segment. Residues Thr-170–Lys-194 are Extracellular-facing. A helical membrane pass occupies residues Val-195 to Val-219. Topologically, residues Gly-220–Lys-248 are cytoplasmic. The chain crosses the membrane as a helical span at residues Met-249–Leu-270. At Pro-271–Ile-283 the chain is on the extracellular side. The helical transmembrane segment at Gln-284–Leu-308 threads the bilayer. At Asn-309 to Ser-407 the chain is on the cytoplasmic side. Cys-322 carries S-palmitoyl cysteine lipidation. Residues Gly-363–Ser-407 form a disordered region. The segment covering Thr-376–Ser-407 has biased composition (polar residues).

Belongs to the G-protein coupled receptor 1 family. In terms of assembly, interacts with ARRB1.

The protein resides in the cell membrane. Functionally, this is a receptor for the tachykinin neuropeptide substance P. It is probably associated with G proteins that activate a phosphatidylinositol-calcium second messenger system. The rank order of affinity of this receptor to tachykinins is: substance P &gt; substance K &gt; neuromedin-K. This is Substance-P receptor (TACR1) from Cavia porcellus (Guinea pig).